The chain runs to 75 residues: Translational regulator CsrA (75 aa).

Belongs to the CsrA/RsmA family. Homodimer; the beta-strands of each monomer intercalate to form a hydrophobic core, while the alpha-helices form wings that extend away from the core.

It localises to the cytoplasm. In terms of biological role, a translational regulator that binds mRNA to regulate translation initiation and/or mRNA stability. Usually binds in the 5'-UTR at or near the Shine-Dalgarno sequence preventing ribosome-binding, thus repressing translation. Its main target seems to be the major flagellin gene, while its function is anatagonized by FliW. The polypeptide is Translational regulator CsrA (Treponema denticola (strain ATCC 35405 / DSM 14222 / CIP 103919 / JCM 8153 / KCTC 15104)).